A 528-amino-acid chain; its full sequence is Probable serine/threonine-protein kinase 380R (528 aa).

A disordered region spans residues 70–96; sequence VKIPKSKSPPKVKSPKRKKSPVRRRVS. Over residues 73–95 the composition is skewed to basic residues; it reads PKSKSPPKVKSPKRKKSPVRRRV. The Protein kinase domain maps to 156 to 507; the sequence is FTNVKAVGKG…LANVLIHKIF (352 aa). Residues 162-170 and K187 each bind ATP; that span reads VGKGSFGTV. The active-site Proton acceptor is the D302.

It belongs to the protein kinase superfamily. Ser/Thr protein kinase family.

It carries out the reaction L-seryl-[protein] + ATP = O-phospho-L-seryl-[protein] + ADP + H(+). The enzyme catalyses L-threonyl-[protein] + ATP = O-phospho-L-threonyl-[protein] + ADP + H(+). This chain is Probable serine/threonine-protein kinase 380R, found in Invertebrate iridescent virus 6 (IIV-6).